We begin with the raw amino-acid sequence, 352 residues long: Photosystem II D2 protein (352 aa).

Thr-2 carries the N-acetylthreonine modification. A Phosphothreonine modification is found at Thr-2. A helical membrane pass occupies residues 40-60; it reads CAYFALGGWLTGTTFVTSWYT. His-117 contributes to the chlorophyll a binding site. The chain crosses the membrane as a helical span at residues 124–140; the sequence is GFMLRQFEIARSVNLRP. Pheophytin a is bound by residues Gln-129 and Asn-142. The chain crosses the membrane as a helical span at residues 152-165; the sequence is VFVSVFLIYPLGQS. His-197 provides a ligand contact to chlorophyll a. Residues 207–227 traverse the membrane as a helical segment; that stretch reads AALLCAIHGATVENTLFEDGD. A plastoquinone is bound by residues His-214 and Phe-261. His-214 is a Fe cation binding site. Position 268 (His-268) interacts with Fe cation. The chain crosses the membrane as a helical span at residues 278–294; that stretch reads GLWMSAIGVVGLALNLR.

The protein belongs to the reaction center PufL/M/PsbA/D family. In terms of assembly, PSII is composed of 1 copy each of membrane proteins PsbA, PsbB, PsbC, PsbD, PsbE, PsbF, PsbH, PsbI, PsbJ, PsbK, PsbL, PsbM, PsbT, PsbX, PsbY, PsbZ, Psb30/Ycf12, at least 3 peripheral proteins of the oxygen-evolving complex and a large number of cofactors. It forms dimeric complexes. The cofactor is The D1/D2 heterodimer binds P680, chlorophylls that are the primary electron donor of PSII, and subsequent electron acceptors. It shares a non-heme iron and each subunit binds pheophytin, quinone, additional chlorophylls, carotenoids and lipids. There is also a Cl(-1) ion associated with D1 and D2, which is required for oxygen evolution. The PSII complex binds additional chlorophylls, carotenoids and specific lipids.. In terms of processing, phosphorylated in vitro.

The protein localises to the plastid. Its subcellular location is the chloroplast thylakoid membrane. The catalysed reaction is 2 a plastoquinone + 4 hnu + 2 H2O = 2 a plastoquinol + O2. Its function is as follows. Photosystem II (PSII) is a light-driven water:plastoquinone oxidoreductase that uses light energy to abstract electrons from H(2)O, generating O(2) and a proton gradient subsequently used for ATP formation. It consists of a core antenna complex that captures photons, and an electron transfer chain that converts photonic excitation into a charge separation. The D1/D2 (PsbA/PsbD) reaction center heterodimer binds P680, the primary electron donor of PSII as well as several subsequent electron acceptors. D2 is needed for assembly of a stable PSII complex. In Chlamydomonas reinhardtii (Chlamydomonas smithii), this protein is Photosystem II D2 protein.